We begin with the raw amino-acid sequence, 313 residues long: HPr kinase/phosphorylase (313 aa).

Active-site residues include His-141 and Lys-162. 156–163 contacts ATP; it reads GKSGIGKS. Mg(2+) is bound at residue Ser-163. Residue Asp-180 is the Proton acceptor; for phosphorylation activity. Proton donor; for dephosphorylation activity of the active site. Residues 203 to 212 are important for the catalytic mechanism of both phosphorylation and dephosphorylation; sequence IEIRGIGIFD. Glu-204 is a binding site for Mg(2+). Arg-247 is an active-site residue. Positions 268-273 are important for the catalytic mechanism of dephosphorylation; sequence PVSAGR.

This sequence belongs to the HPrK/P family. In terms of assembly, homohexamer. The cofactor is Mg(2+).

The enzyme catalyses [HPr protein]-L-serine + ATP = [HPr protein]-O-phospho-L-serine + ADP + H(+). The catalysed reaction is [HPr protein]-O-phospho-L-serine + phosphate + H(+) = [HPr protein]-L-serine + diphosphate. Functionally, catalyzes the ATP- as well as the pyrophosphate-dependent phosphorylation of a specific serine residue in HPr, a phosphocarrier protein of the phosphoenolpyruvate-dependent sugar phosphotransferase system (PTS). HprK/P also catalyzes the pyrophosphate-producing, inorganic phosphate-dependent dephosphorylation (phosphorolysis) of seryl-phosphorylated HPr (P-Ser-HPr). The two antagonistic activities of HprK/P are regulated by several intracellular metabolites, which change their concentration in response to the absence or presence of rapidly metabolisable carbon sources (glucose, fructose, etc.) in the growth medium. Therefore, by controlling the phosphorylation state of HPr, HPrK/P is a sensor enzyme that plays a major role in the regulation of carbon metabolism and sugar transport: it mediates carbon catabolite repression (CCR), and regulates PTS-catalyzed carbohydrate uptake and inducer exclusion. This Mycoplasma mycoides subsp. mycoides SC (strain CCUG 32753 / NCTC 10114 / PG1) protein is HPr kinase/phosphorylase.